The primary structure comprises 56 residues: Ribosome modulation factor (56 aa).

It belongs to the ribosome modulation factor family.

It is found in the cytoplasm. In terms of biological role, during stationary phase, converts 70S ribosomes to an inactive dimeric form (100S ribosomes). The sequence is that of Ribosome modulation factor from Serratia proteamaculans (strain 568).